We begin with the raw amino-acid sequence, 246 residues long: Phosphomannomutase 2 (246 aa).

Ala2 carries the N-acetylalanine modification. Residue Asp12 is the Nucleophile of the active site. 2 residues coordinate Mg(2+): Asp12 and Asp14. Asp14 serves as the catalytic Proton donor/acceptor. Residues Arg21, Arg123, Arg134, Arg141, Ser179, and Asp181 each coordinate alpha-D-mannose 1-phosphate. Asp209, Phe221, Asp223, and Thr226 together coordinate Mg(2+).

The protein belongs to the eukaryotic PMM family. Homodimer.

It localises to the cytoplasm. The catalysed reaction is alpha-D-mannose 1-phosphate = D-mannose 6-phosphate. It participates in nucleotide-sugar biosynthesis; GDP-alpha-D-mannose biosynthesis; alpha-D-mannose 1-phosphate from D-fructose 6-phosphate: step 2/2. Involved in the synthesis of the GDP-mannose and dolichol-phosphate-mannose required for a number of critical mannosyl transfer reactions. This Bos taurus (Bovine) protein is Phosphomannomutase 2 (PMM2).